A 108-amino-acid polypeptide reads, in one-letter code: Hydrogenase expression/formation protein HupN (108 aa).

The segment at 88-108 (REPQLPPHLQAQLPPKEPNSP) is disordered.

Belongs to the HupF/HypC family.

The chain is Hydrogenase expression/formation protein HupN (hupN) from Azotobacter chroococcum mcd 1.